Here is a 147-residue protein sequence, read N- to C-terminus: MVHFTAEEKAAITSIWDKVDLEKVGGETLGRLLIVYPWTQRFFDKFGNLSSAQAIMGNPRIKAHGKKVLTSLGLAVKNMDNLKETFAHLSELHCDKLHADPENFKLLGNMLVIVLSSYFGKEFTAEAQAAWQKLVVGVATALSHKYH.

The Globin domain maps to 3–147; it reads HFTAEEKAAI…VATALSHKYH (145 aa). Heme b-binding residues include His64 and His93.

This sequence belongs to the globin family. Heterotetramer of two alpha chains and two beta chains. In terms of tissue distribution, red blood cells.

This is a minor early embryonic beta chain. The polypeptide is Hemoglobin subunit beta-H0 (Hbb-bh0) (Mus musculus (Mouse)).